The chain runs to 206 residues: Probable GTP-binding protein EngB (206 aa).

One can recognise an EngB-type G domain in the interval 23 to 202 (HTAEVAFVGR…WGALLDTFGK (180 aa)). Residues 31 to 38 (GRSNVGKS), 58 to 62 (GRTRT), 83 to 86 (DLPG), 150 to 153 (TKVD), and 181 to 183 (FSS) contribute to the GTP site. Residues serine 38 and threonine 60 each contribute to the Mg(2+) site.

This sequence belongs to the TRAFAC class TrmE-Era-EngA-EngB-Septin-like GTPase superfamily. EngB GTPase family. The cofactor is Mg(2+).

Its function is as follows. Necessary for normal cell division and for the maintenance of normal septation. The chain is Probable GTP-binding protein EngB from Myxococcus xanthus (strain DK1622).